A 1594-amino-acid polypeptide reads, in one-letter code: DTTAGPDTTSAPQPTTPTGLCGFIRRQPLPEDNLNALNFTLSNFTVERWCAREPEFKQFLAQSVSDRCFGNGSCGVESGIPEVFIFPGFPVVNSPLLVRFYVRLQVNSSVSVVLERTVLTSILDRVLENLTAEFGVQFSVDGGFTEWSPFGPCSTSCGPGIQVRFRNCTNPPPINNGSDCVGPRNETRPCNNGSCPIDGNFTQWEIWSGCSVTCGKGVQRRFRSCTKPPPSNGGQDCIGDRLETRECLKPPCPVDGNFTEWGAWSKCSQTCENGTQVRFRSCTNPPPAFGGRDCMGPTNETRACNDGPCPGRLYPHGLLANDNLLPNRDAFSNFCGRINLFNQEIPFFIRRHRRVYICRNGMLKFRRSAIIRYPQRFPGPRNEDFLFRFRNSYIIAPYWLTISDDAFEQPINTSKVFYRIYSKFSRRDRDVLDRANHDVRRFQTSVPQFEAQWVLVVTWLQLYPPTFPGVRLSNSFQVVLITDGQHTFSLFNYPENGIQWSTPTGRLFPNLYPPGSGLPVAGYNAGDRNLPFFNLPNSGTVNIQNIDQMMGNTNLTGVWFFRLEMNSILSLAGKKCNEWSRQRTSRISPTLPPCPCLFGQATLDKRYFVDYNQTVSKRGNGTICAYSLPSGSRRWVQQCCYTDLPSGGKVLSSSPPESGGPYLIALPGSPVISDADGHEFCCSSSQCSLYYRLRPPRSCFGYTLRRRGLIFGDPHFTTLDNTTYTFNGLGEYTIVAIDDEAFEMQARTARTSGRGLGTAFSAAVAKERGTATVEARINQKAGDLEVLIAGKPFNISTITTTGTNIPDGNITLVRDSNGSITALFPSNIAFTFTDVEGTLAIAFEAPDDFKNRTKGLLGTWNDDPSDDFVTPDGTLVPADAAPRRIHYEFGLKWQINASQSLFTYSDLESPSTFVDLSYIPMFIDNITWVNDSFRYEAVKACGNNTQCLFDAAVTEDTSYGINTKKLEDNNNEINKELANFPPKILGPKVINATIGQAIEVKITAEHNSSDFFVFTVNNLPDVIILANTSRYLLIRWTPTSLQKVEPVFIVTDSHNSSSELRPLILLCPCANGSRCIDDEEVSNQRNKGFSFLLLSCTCPAGLTGQYCQHKIDACVENNQPCFPGVKCTDVSSSSNGTRYQCDPCPKGYSGNGSICEDIDECSDANVSKCDHSCINLPGSYVCDCNQGFSLEGDGTSCKDINECLISNDCMQNCTNLPGGRTCSCLDGFQIDPKDQTACVPISRCDTFKVGCQQVCVMDRGQPKCACHKGYSLNADGRTCDDINECTTHRHKCSQICHNLDGSYTCSCQPGFNLSPDQTTCEDIDECGLINEAHCEGSLEICINTMGSFRCECQDGFHRVNDTCQESLPSTNGPTGTTGIVASSVSIALTIKDADLHEWQARLSRMFMDAVAKVVVDYCKGNANGNCYGNAVIAKRYTRSISGTSLVARVHILNDFPETRDANLLVAFYVMLSTNQGEVYVMNKDSLLRALQESQTELSWAIKKEISEIRALKVDDESPTPYETREDGLEMIWLLVGVSVAVAVPLMIVIVILYREYRRIAKQRRKTNNFDLRQWSGARERTIYSGFTNSKSARL.

At 1-1530 the chain is on the extracellular side; the sequence is DTTAGPDTTS…YETREDGLEM (1530 aa). TSP type-1 domains are found at residues 141–196, 198–253, and 255–310; these read DGGF…GSCP, DGNF…PPCP, and DGNF…GPCP. Intrachain disulfides connect C153-C190, C157-C195, C168-C180, C210-C247, C214-C252, C225-C237, C267-C304, C271-C309, and C282-C294. Residues 400–566 form the NIDO domain; sequence LTISDDAFEQ…GVWFFRLEMN (167 aa). Positions 568–706 constitute an AMOP domain; sequence ILSLAGKKCN…RSCFGYTLRR (139 aa). One can recognise a VWFD domain in the interval 706-901; sequence RRGLIFGDPH…KWQINASQSL (196 aa). 2 EGF-like domains span residues 1063 to 1108 and 1110 to 1156; these read LILL…QYCQ and KIDA…SICE. 14 cysteine pairs are disulfide-bonded: C1067–C1075, C1069–C1096, C1098–C1107, C1114–C1127, C1121–C1141, C1144–C1155, C1161–C1173, C1169–C1182, C1285–C1296, C1292–C1305, C1307–C1320, C1326–C1341, C1334–C1350, and C1352–C1363. Residues 1157 to 1191 enclose the EGF-like 3; calcium-binding domain; sequence DIDECSDANVSKCDHSCINLPGSYVCDCNQGFSLE. Residues 1281-1321 enclose the EGF-like 4; calcium-binding domain; sequence DINECTTHRHKCSQICHNLDGSYTCSCQPGFNLSPDQTTCE. The 43-residue stretch at 1322-1364 folds into the EGF-like 5; calcium-binding domain; that stretch reads DIDECGLINEAHCEGSLEICINTMGSFRCECQDGFHRVNDTCQ. The chain crosses the membrane as a helical span at residues 1531-1551; sequence IWLLVGVSVAVAVPLMIVIVI. Residues 1552–1593 lie on the Cytoplasmic side of the membrane; the sequence is LYREYRRIAKQRRKTNNFDLRQWSGARERTIYSGFTNSKSAR.

As to expression, component of the acid-insoluble and acid-soluble organic matrix of the aragonitic skeleton (at protein level).

It is found in the membrane. This chain is Mucin-like protein, found in Acropora millepora (Staghorn coral).